Reading from the N-terminus, the 340-residue chain is Organic solute transporter subunit alpha (340 aa).

At 1–52 the chain is on the extracellular side; the sequence is MEPDRTQIRLDPRYTADLLEILKTNYSVPSACFSYPPTAAQLLRALGPVDIS. Asn-25 is a glycosylation site (N-linked (GlcNAc...) asparagine). A helical transmembrane segment spans residues 53–73; that stretch reads LMVIMTLFVLGSIAIFLEAAV. Over 74-87 the chain is Cytoplasmic; the sequence is YLHKNTRCPIKRKT. A helical transmembrane segment spans residues 88–108; sequence LIWCSSSPTIVSAFSCFGLWI. The Extracellular segment spans residues 109–110; the sequence is PR. A helical transmembrane segment spans residues 111 to 131; it reads ALTLVEMAITTFYSMCFYLLM. The Cytoplasmic segment spans residues 132-186; it reads QAMVEGFGGKEAVLRTLKDTPVMIHTGPCCCCCPCCPRIKITRKRLQLLLLGPIQ. A helical membrane pass occupies residues 187–207; sequence YAFFKISLTLVGLFLIPDGIF. The Extracellular segment spans residues 208–219; the sequence is DPSDISEGSTAL. Residues 220 to 240 traverse the membrane as a helical segment; the sequence is WINTFLGVSTLSALWTIGIIF. Residues 241 to 255 lie on the Cytoplasmic side of the membrane; it reads RQARLHLGEQNIGAK. A helical membrane pass occupies residues 256-276; it reads FVLFQALLILSALQPSIFSVL. Over 277 to 295 the chain is Extracellular; the sequence is ASGGQIACSPPFSSKIRSQ. Residues 296 to 316 form a helical membrane-spanning segment; sequence VMNCHLLILESFLITVLTRIY. The Cytoplasmic portion of the chain corresponds to 317-340; the sequence is YRRKDDKLGYEPFSSPDQDLNLKA. Ser-330 is subject to Phosphoserine.

Belongs to the OST-alpha family. In terms of assembly, interacts with SLC51B. The Ost-alpha/Ost-beta complex is a heterodimer composed of alpha (SLC51A) and beta (SLC51B) subunit.

It localises to the cell membrane. The protein resides in the endoplasmic reticulum membrane. The catalysed reaction is taurocholate(out) = taurocholate(in). It carries out the reaction estrone 3-sulfate(out) = estrone 3-sulfate(in). It catalyses the reaction dehydroepiandrosterone 3-sulfate(out) = dehydroepiandrosterone 3-sulfate(in). The enzyme catalyses tauroursodeoxycholate(out) = tauroursodeoxycholate(in). The catalysed reaction is glycoursodeoxycholate(out) = glycoursodeoxycholate(in). It carries out the reaction glycocholate(out) = glycocholate(in). It catalyses the reaction taurochenodeoxycholate(out) = taurochenodeoxycholate(in). The enzyme catalyses glycochenodeoxycholate(out) = glycochenodeoxycholate(in). The catalysed reaction is taurodeoxycholate(out) = taurodeoxycholate(in). It carries out the reaction glycodeoxycholate(out) = glycodeoxycholate(in). It catalyses the reaction prostaglandin E2(out) = prostaglandin E2(in). Its function is as follows. Essential component of the Ost-alpha/Ost-beta complex, a heterodimer that acts as the intestinal basolateral transporter responsible for bile acid export from enterocytes into portal blood. Efficiently transports the major species of bile acids (taurocholate). Taurine conjugates are transported more efficiently across the basolateral membrane than glycine-conjugated bile acids. Can also transport steroids such as estrone 3-sulfate and dehydroepiandrosterone 3-sulfate, therefore playing a role in the enterohepatic circulation of sterols. Able to transport eicosanoids such as prostaglandin E2. In Bos taurus (Bovine), this protein is Organic solute transporter subunit alpha (SLC51A).